The following is a 367-amino-acid chain: Nodulation protein NolF (367 aa).

This sequence belongs to the membrane fusion protein (MFP) (TC 8.A.1) family.

Functionally, involved in the production of Medicago-specific nodulation signal molecule. The sequence is that of Nodulation protein NolF (nolF) from Rhizobium meliloti (strain 1021) (Ensifer meliloti).